We begin with the raw amino-acid sequence, 175 residues long: NADH-ubiquinone oxidoreductase chain 6 (175 aa).

5 consecutive transmembrane segments (helical) span residues 1–21 (MMIYIGFILSIVFVISFVGFS), 25–45 (SPIYGGLVLIVSGGVGCGIVM), 47–67 (FGGSFLGLMVFLIYLGGMLVV), 88–108 (TVLSTFILGVLMEAMLVLYMF), and 149–169 (YGVWIIIVTGWSLFVGVLVVL).

The protein belongs to the complex I subunit 6 family. As to quaternary structure, core subunit of respiratory chain NADH dehydrogenase (Complex I) which is composed of 45 different subunits.

It is found in the mitochondrion inner membrane. The enzyme catalyses a ubiquinone + NADH + 5 H(+)(in) = a ubiquinol + NAD(+) + 4 H(+)(out). In terms of biological role, core subunit of the mitochondrial membrane respiratory chain NADH dehydrogenase (Complex I) which catalyzes electron transfer from NADH through the respiratory chain, using ubiquinone as an electron acceptor. Essential for the catalytic activity and assembly of complex I. This Rhinoceros unicornis (Greater Indian rhinoceros) protein is NADH-ubiquinone oxidoreductase chain 6 (MT-ND6).